A 182-amino-acid polypeptide reads, in one-letter code: tRNA-splicing endonuclease (182 aa).

Active-site residues include Tyr119, His127, and Lys158.

This sequence belongs to the tRNA-intron endonuclease family. Archaeal short subfamily. Homotetramer; although the tetramer contains four active sites, only two participate in the cleavage. Therefore, it should be considered as a dimer of dimers.

It catalyses the reaction pretRNA = a 3'-half-tRNA molecule with a 5'-OH end + a 5'-half-tRNA molecule with a 2',3'-cyclic phosphate end + an intron with a 2',3'-cyclic phosphate and a 5'-hydroxyl terminus.. Endonuclease that removes tRNA introns. Cleaves pre-tRNA at the 5'- and 3'-splice sites to release the intron. The products are an intron and two tRNA half-molecules bearing 2',3' cyclic phosphate and 5'-OH termini. Recognizes a pseudosymmetric substrate in which 2 bulged loops of 3 bases are separated by a stem of 4 bp. This Saccharolobus islandicus (strain M.14.25 / Kamchatka #1) (Sulfolobus islandicus) protein is tRNA-splicing endonuclease.